Reading from the N-terminus, the 124-residue chain is ATP synthase epsilon chain (124 aa).

The segment covering 99–118 (LEQAKTEGDAHAERRADVRL) has biased composition (basic and acidic residues). A disordered region spans residues 99–124 (LEQAKTEGDAHAERRADVRLRAAAGR).

It belongs to the ATPase epsilon chain family. As to quaternary structure, F-type ATPases have 2 components, CF(1) - the catalytic core - and CF(0) - the membrane proton channel. CF(1) has five subunits: alpha(3), beta(3), gamma(1), delta(1), epsilon(1). CF(0) has three main subunits: a, b and c.

The protein localises to the cell membrane. Functionally, produces ATP from ADP in the presence of a proton gradient across the membrane. The sequence is that of ATP synthase epsilon chain (atpC) from Streptomyces coelicolor (strain ATCC BAA-471 / A3(2) / M145).